A 551-amino-acid chain; its full sequence is DNA mismatch repair protein MutL (551 aa).

It belongs to the DNA mismatch repair MutL/HexB family.

Its function is as follows. This protein is involved in the repair of mismatches in DNA. It is required for dam-dependent methyl-directed DNA mismatch repair. May act as a 'molecular matchmaker', a protein that promotes the formation of a stable complex between two or more DNA-binding proteins in an ATP-dependent manner without itself being part of a final effector complex. This chain is DNA mismatch repair protein MutL, found in Thermosipho melanesiensis (strain DSM 12029 / CIP 104789 / BI429).